The sequence spans 300 residues: Probable low-salt glycan biosynthesis reductase Agl14 (300 aa).

NADH contacts are provided by residues 10 to 12, 46 to 47, and 70 to 72; these read GLL, DI, and AYT. Residues 11-12, 46-47, 70-72, Tyr-109, Tyr-135, and Lys-139 contribute to the NADPH site; these read LL, DI, and AYT. 2 residues coordinate NADH: Tyr-135 and Lys-139. Tyr-135 serves as the catalytic Proton donor/acceptor.

This sequence belongs to the dTDP-4-dehydrorhamnose reductase family.

The protein operates within protein modification; protein glycosylation. It functions in the pathway cell surface structure biogenesis; S-layer biogenesis. Its function is as follows. Reductase involved in N-glycan biosynthetic pathway that takes place under low-salt conditions (1.75 M instead of 3.4 M). Participates in the formation of the tetrasaccharide present at 'Asn-532' of S-layer glycoprotein Csg, consisting of a sulfated hexose, 2 hexoses and rhamnose. Involved in the addition of final rhamnose (sugar 4) of the tetrasaccharide on the dolichol phosphate carrier. The sequence is that of Probable low-salt glycan biosynthesis reductase Agl14 (agl14) from Haloferax volcanii (strain ATCC 29605 / DSM 3757 / JCM 8879 / NBRC 14742 / NCIMB 2012 / VKM B-1768 / DS2) (Halobacterium volcanii).